The following is a 377-amino-acid chain: MSFRAPNLIRSTVGRRAGQTLNLRSQVIRRRFATEGGPEITKPSAPRSSNTGYIFAGLGVAAVGAAYYFYGTGRTEHDSTNKADTVVREAVATVEAKTGLRRGKDEYQKVYNRIAETLDKEGYDDGSLAPVLLRLAWHASGTYSKADGTGGSNFATMRFKPEAEHSANNGLHVAREHMEKIKQEFPWISYGDLWTLGGVCAIQESGGPTIPWRPGRIDGYAAQVTPDGRLPDATQAQDHLRFIFNRMGFNDQEIVALSGAHAMGRCHPNRSGFDGPWTFSPVTFSNQYFALLRDEPWQWKKWTGPAQFEDKKTKTLMMLPTDMALVKDKSFKKYVDIYADNEEKFFSDFAKAFSKLIELGVPERQWAGEPWTMATSD.

A mitochondrion-targeting transit peptide spans 1 to 32 (MSFRAPNLIRSTVGRRAGQTLNLRSQVIRRRF). The Proton acceptor role is filled by His-138. His-261 lines the heme b pocket. The active-site Tryptophan radical intermediate is the Trp-277.

The protein belongs to the peroxidase family. Cytochrome c peroxidase subfamily. As to quaternary structure, forms a one-to-one complex with cytochrome c. Interacts with MID1 (via C-terminus); the interaction may contribute to cellular detoxification of radicals. Heme b serves as cofactor.

Its subcellular location is the mitochondrion matrix. The protein resides in the mitochondrion intermembrane space. It carries out the reaction 2 Fe(II)-[cytochrome c] + H2O2 + 2 H(+) = 2 Fe(III)-[cytochrome c] + 2 H2O. Destroys radicals which are normally produced within the cells and which are toxic to biological systems. The chain is Cytochrome c peroxidase, mitochondrial (CCP1) from Cryptococcus neoformans var. grubii serotype A (strain H99 / ATCC 208821 / CBS 10515 / FGSC 9487) (Filobasidiella neoformans var. grubii).